The chain runs to 176 residues: ATP synthase subunit delta (176 aa).

Belongs to the ATPase delta chain family. As to quaternary structure, F-type ATPases have 2 components, F(1) - the catalytic core - and F(0) - the membrane proton channel. F(1) has five subunits: alpha(3), beta(3), gamma(1), delta(1), epsilon(1). F(0) has three main subunits: a(1), b(2) and c(10-14). The alpha and beta chains form an alternating ring which encloses part of the gamma chain. F(1) is attached to F(0) by a central stalk formed by the gamma and epsilon chains, while a peripheral stalk is formed by the delta and b chains.

It localises to the cell inner membrane. Functionally, f(1)F(0) ATP synthase produces ATP from ADP in the presence of a proton or sodium gradient. F-type ATPases consist of two structural domains, F(1) containing the extramembraneous catalytic core and F(0) containing the membrane proton channel, linked together by a central stalk and a peripheral stalk. During catalysis, ATP synthesis in the catalytic domain of F(1) is coupled via a rotary mechanism of the central stalk subunits to proton translocation. In terms of biological role, this protein is part of the stalk that links CF(0) to CF(1). It either transmits conformational changes from CF(0) to CF(1) or is implicated in proton conduction. The protein is ATP synthase subunit delta of Polaromonas sp. (strain JS666 / ATCC BAA-500).